The following is a 591-amino-acid chain: Aspartate--tRNA(Asp/Asn) ligase (591 aa).

E170 is a binding site for L-aspartate. Residues 194–197 (QLFK) are aspartate. R216 lines the L-aspartate pocket. Residues 216 to 218 (RDE) and Q225 each bind ATP. H448 contacts L-aspartate. An ATP-binding site is contributed by E482. R489 contacts L-aspartate. Position 534 to 537 (534 to 537 (GWDR)) interacts with ATP. The segment at 559-591 (GGVDPLTDAPAPITEQQRKESGIDVKPEPSKPH) is disordered. Residues 574 to 591 (QQRKESGIDVKPEPSKPH) are compositionally biased toward basic and acidic residues.

It belongs to the class-II aminoacyl-tRNA synthetase family. Type 1 subfamily. In terms of assembly, homodimer.

The protein resides in the cytoplasm. It catalyses the reaction tRNA(Asx) + L-aspartate + ATP = L-aspartyl-tRNA(Asx) + AMP + diphosphate. Functionally, aspartyl-tRNA synthetase with relaxed tRNA specificity since it is able to aspartylate not only its cognate tRNA(Asp) but also tRNA(Asn). Reaction proceeds in two steps: L-aspartate is first activated by ATP to form Asp-AMP and then transferred to the acceptor end of tRNA(Asp/Asn). This chain is Aspartate--tRNA(Asp/Asn) ligase, found in Mycolicibacterium paratuberculosis (strain ATCC BAA-968 / K-10) (Mycobacterium paratuberculosis).